The following is a 115-amino-acid chain: UPF0102 protein NGO_1987 (115 aa).

Belongs to the UPF0102 family.

This chain is UPF0102 protein NGO_1987, found in Neisseria gonorrhoeae (strain ATCC 700825 / FA 1090).